We begin with the raw amino-acid sequence, 295 residues long: MFMSALQLVIVTGMSGAGKTVAVQSFEDLGYFCVDNMPPKLLPKFYELVKESGKITKIALVVDLRSRAFYDEIVEMVRELDENEFNSSRILFLDASDEELVARYKETRRSHPLAMEGRILDGIHLERELLAPIKSNAQIIIDTSKLSPRQLREEIFKNFEARDTKTFHIEVMSFGFKYGLPIDADIVMDVRFLPNPYYVSELRNKTGKDDAVYEYVMKSEKTEEFYQKFVSLLKYVIPGYIAEGKSNVTIAIGCTGGQHRSVALAERIGNELSKEYPVHMSHRDMNKRKETVNRS.

13 to 20 (GMSGAGKT) is a binding site for ATP. Position 63-66 (63-66 (DLRS)) interacts with GTP.

Belongs to the RapZ-like family.

Functionally, displays ATPase and GTPase activities. The sequence is that of Nucleotide-binding protein LSL_1171 from Ligilactobacillus salivarius (strain UCC118) (Lactobacillus salivarius).